Reading from the N-terminus, the 495-residue chain is Probable cytosol aminopeptidase (495 aa).

Positions 266 and 271 each coordinate Mn(2+). Residue Lys-278 is part of the active site. Residues Asp-289, Asp-348, and Glu-350 each contribute to the Mn(2+) site. Arg-352 is a catalytic residue.

It belongs to the peptidase M17 family. Requires Mn(2+) as cofactor.

It is found in the cytoplasm. The enzyme catalyses Release of an N-terminal amino acid, Xaa-|-Yaa-, in which Xaa is preferably Leu, but may be other amino acids including Pro although not Arg or Lys, and Yaa may be Pro. Amino acid amides and methyl esters are also readily hydrolyzed, but rates on arylamides are exceedingly low.. It carries out the reaction Release of an N-terminal amino acid, preferentially leucine, but not glutamic or aspartic acids.. Its function is as follows. Presumably involved in the processing and regular turnover of intracellular proteins. Catalyzes the removal of unsubstituted N-terminal amino acids from various peptides. The sequence is that of Probable cytosol aminopeptidase from Pseudomonas aeruginosa (strain LESB58).